The chain runs to 238 residues: Uracil-DNA glycosylase (238 aa).

The active-site Proton acceptor is Asp81.

Belongs to the uracil-DNA glycosylase (UDG) superfamily. UNG family.

It localises to the cytoplasm. It catalyses the reaction Hydrolyzes single-stranded DNA or mismatched double-stranded DNA and polynucleotides, releasing free uracil.. Excises uracil residues from the DNA which can arise as a result of misincorporation of dUMP residues by DNA polymerase or due to deamination of cytosine. This Corynebacterium efficiens (strain DSM 44549 / YS-314 / AJ 12310 / JCM 11189 / NBRC 100395) protein is Uracil-DNA glycosylase.